A 458-amino-acid polypeptide reads, in one-letter code: UDP-N-acetylmuramate--L-alanine ligase (458 aa).

119–125 contacts ATP; the sequence is GTHGKTT.

This sequence belongs to the MurCDEF family.

The protein localises to the cytoplasm. It carries out the reaction UDP-N-acetyl-alpha-D-muramate + L-alanine + ATP = UDP-N-acetyl-alpha-D-muramoyl-L-alanine + ADP + phosphate + H(+). It participates in cell wall biogenesis; peptidoglycan biosynthesis. Cell wall formation. The chain is UDP-N-acetylmuramate--L-alanine ligase from Phocaeicola vulgatus (strain ATCC 8482 / DSM 1447 / JCM 5826 / CCUG 4940 / NBRC 14291 / NCTC 11154) (Bacteroides vulgatus).